The chain runs to 117 residues: Large ribosomal subunit protein bL20c (117 aa).

Belongs to the bacterial ribosomal protein bL20 family.

It is found in the plastid. Its subcellular location is the chloroplast. Its function is as follows. Binds directly to 23S ribosomal RNA and is necessary for the in vitro assembly process of the 50S ribosomal subunit. It is not involved in the protein synthesizing functions of that subunit. The protein is Large ribosomal subunit protein bL20c of Chloranthus spicatus (Chulantree).